Reading from the N-terminus, the 470-residue chain is Dendritic cell-specific transmembrane protein (470 aa).

Topologically, residues 1–34 (MGIWTSGTDIFLSLWEIYVSPRSPGWMDFIQHLG) are cytoplasmic. Residues 35-55 (VCCLVALISVGLLSVAACWFL) form a helical membrane-spanning segment. Residues 56-57 (PS) lie on the Extracellular side of the membrane. The helical transmembrane segment at 58–78 (IIAAAASWIITCVLLCCSKHA) threads the bilayer. Residues 79-97 (RCFILLVFLSCGLREGRNA) are Cytoplasmic-facing. The helical transmembrane segment at 98–118 (LIAAGTGIVILGHVENIFHNF) threads the bilayer. At 119 to 209 (KGLLDGMTCN…MATTTEVLSS (91 aa)) the chain is on the extracellular side. Residues 210–230 (LGQKLLAFAGLSLVLLGTGLF) form a helical membrane-spanning segment. Residues 231–292 (MKRFLGPCGW…FWPTPKERKN (62 aa)) lie on the Cytoplasmic side of the membrane. The helical transmembrane segment at 293–313 (LGLFFLPILIHLCIWVLFAAV) threads the bilayer. The Extracellular segment spans residues 314–376 (DYLLYRLIFS…PKPKFLLSET (63 aa)). A helical transmembrane segment spans residues 377–397 (WVPLSVILLILVMLGLLSSIL). Topologically, residues 398–470 (MQLKILVSAS…QMDMASADKS (73 aa)) are cytoplasmic.

Monomer. Homodimer. Isoform 1 interacts (via the C-terminus cytoplasmic tail) with OS9 isoform 1 (via the C-terminus tail); the interaction induces DCSTAMP redistribution to the endoplasmic reticulum-Golgi intermediate compartment. Isoform 1 interacts (via the C-terminus cytoplasmic tail) with OS9 isoform 2 (via the C-terminus tail). Interacts with CREB3. Glycosylated. In terms of tissue distribution, preferentially expressed by dendritic cells (DCs). Detected in both immature and mature DCs. Highly expressed in lymph nodes, lung, kidney and liver. Expressed at lower levels in pancreas, bone marrow, spleen, leukocytes, in freshly isolated peripheral blood mononuclear cells (PBMC) and B-cells. Not expressed in freshly isolated monocytes.

The protein localises to the cell membrane. It localises to the endoplasmic reticulum membrane. Its subcellular location is the endoplasmic reticulum-Golgi intermediate compartment membrane. It is found in the endosome. In terms of biological role, probable cell surface receptor that plays several roles in cellular fusion, cell differentiation, bone and immune homeostasis. Plays a role in TNFSF11-mediated osteoclastogenesis. Cooperates with OCSTAMP in modulating cell-cell fusion in both osteoclasts and foreign body giant cells (FBGCs). Participates in osteoclast bone resorption. Involved in inducing the expression of tartrate-resistant acid phosphatase in osteoclast precursors. Plays a role in haematopoietic stem cell differentiation of bone marrow cells toward the myeloid lineage. Inhibits the development of neutrophilic granulocytes. Plays also a role in the regulation of dendritic cell (DC) antigen presentation activity by controlling phagocytic activity. Involved in the maintenance of immune self-tolerance and avoidance of autoimmune reactions. This is Dendritic cell-specific transmembrane protein (DCSTAMP) from Homo sapiens (Human).